The chain runs to 207 residues: Ras-related protein Rab-8B (207 aa).

Residues Ser-17, Gly-18, Val-19, Gly-20, Lys-21, Thr-22, Cys-23, Thr-35, Ser-39, and Thr-40 each contribute to the GTP site. Thr-22 serves as a coordination point for Mg(2+). Short sequence motifs (switch) lie at residues 31 to 45 (DAFNTTFISTIGIDF) and 63 to 80 (DTAGQERFRTITTAYYRG). Thr-40 and Asp-63 together coordinate Mg(2+). GTP is bound at residue Gly-66. Thr-72 carries the post-translational modification Phosphothreonine; by LRRK2. GTP-binding residues include Asn-121, Lys-122, Asp-124, Ala-152, and Lys-153. A phosphoserine mark is found at Ser-180 and Ser-183. Cys-204 bears the Cysteine methyl ester mark. Residue Cys-204 is the site of S-geranylgeranyl cysteine attachment. A propeptide spans 205–207 (SLL) (removed in mature form).

Belongs to the small GTPase superfamily. Rab family. As to quaternary structure, associated with actin, delta-catenin and alpha and beta tubulins. Interacts with OTOF. Interacts with PEX5R. Interacts with RAB3IP. Interacts with VIM. Interacts with CDH1. Interacts with MICALL2. Interacts with GDI1, GDI2, CHML and CHM; phosphorylation at Thr-72 disrupts these interactions. Interacts with MICAL1. Mg(2+) is required as a cofactor. In terms of processing, phosphorylation of Thr-72 in the switch II region by LRRK2 prevents the association of RAB regulatory proteins, including CHM, CHML and RAB GDP dissociation inhibitors GDI1 and GDI2.

The protein localises to the cell membrane. It localises to the cytoplasmic vesicle. It is found in the phagosome membrane. Its subcellular location is the endosome membrane. It catalyses the reaction GTP + H2O = GDP + phosphate + H(+). With respect to regulation, regulated by guanine nucleotide exchange factors (GEFs) including RAB3IP/RABIN8 which promotes the exchange of bound GDP for free GTP. Regulated by GTPase activating proteins (GAPs) which increase the GTP hydrolysis activity. Inhibited by GDP dissociation inhibitors (GDIs). The small GTPases Rab are key regulators of intracellular membrane trafficking, from the formation of transport vesicles to their fusion with membranes. Rabs cycle between an inactive GDP-bound form and an active GTP-bound form that is able to recruit to membranes different sets of downstream effectors directly responsible for vesicle formation, movement, tethering and fusion. RAB8B may be involved in polarized vesicular trafficking and neurotransmitter release. May participate in cell junction dynamics in Sertoli cells. May also participate in the export of a subset of neosynthesized proteins through a Rab8-Rab10-Rab11-dependent endososomal export route. The polypeptide is Ras-related protein Rab-8B (Mus musculus (Mouse)).